A 788-amino-acid chain; its full sequence is LPS-assembly protein LptD (788 aa).

Positions 1–24 (MKKRFPTLLATLIWTALYSQHTLA) are cleaved as a signal peptide.

This sequence belongs to the LptD family. Component of the lipopolysaccharide transport and assembly complex. Interacts with LptE and LptA.

Its subcellular location is the cell outer membrane. In terms of biological role, together with LptE, is involved in the assembly of lipopolysaccharide (LPS) at the surface of the outer membrane. This chain is LPS-assembly protein LptD, found in Yersinia enterocolitica serotype O:8 / biotype 1B (strain NCTC 13174 / 8081).